Here is a 721-residue protein sequence, read N- to C-terminus: Mitogen-activated protein kinase 6 (721 aa).

In terms of domain architecture, Protein kinase spans 20 to 316 (YMDLKPLGCG…AEEALSHPYM (297 aa)). ATP is bound by residues 26-34 (LGCGGNGLV) and lysine 49. The Proton acceptor role is filled by aspartate 152. At threonine 626 the chain carries Phosphothreonine. Positions 626-628 (TSY) match the TXY motif. Residue tyrosine 628 is modified to Phosphotyrosine.

It belongs to the protein kinase superfamily. CMGC Ser/Thr protein kinase family. MAP kinase subfamily. Requires Mg(2+) as cofactor. In terms of processing, dually phosphorylated on Thr-626 and Tyr-628, which activates the enzyme.

It catalyses the reaction L-seryl-[protein] + ATP = O-phospho-L-seryl-[protein] + ADP + H(+). The catalysed reaction is L-threonyl-[protein] + ATP = O-phospho-L-threonyl-[protein] + ADP + H(+). Its activity is regulated as follows. Activated by threonine and tyrosine phosphorylation. Its function is as follows. Phosphorylates microtubule-associated protein 2 (MAP2). May promote entry in the cell cycle. This Gallus gallus (Chicken) protein is Mitogen-activated protein kinase 6 (MAPK6).